The following is a 237-amino-acid chain: MEIIPAIDILGGRCVRLLQGDYAQETVYSPDPVGTAMRWQSLGAPRLHVVDLDGAADGESVNFELIREIANSALIPVEVGGGIRSMDTVKKLLTAGVDRVILGTVAVENPELVREICARYADSVAVSIDARNGKVATRGWVNSTEVDALELARSMKKLGVKRFIYTDISRDGTLSEPNFAAIRDLISAINMPVIASGGVSSLSHLRLLKDIGAEGAIVGKAIYTGDLNLKRAFEELS.

The Proton acceptor role is filled by Asp-8. Asp-129 serves as the catalytic Proton donor.

Belongs to the HisA/HisF family.

It is found in the cytoplasm. The enzyme catalyses 1-(5-phospho-beta-D-ribosyl)-5-[(5-phospho-beta-D-ribosylamino)methylideneamino]imidazole-4-carboxamide = 5-[(5-phospho-1-deoxy-D-ribulos-1-ylimino)methylamino]-1-(5-phospho-beta-D-ribosyl)imidazole-4-carboxamide. The protein operates within amino-acid biosynthesis; L-histidine biosynthesis; L-histidine from 5-phospho-alpha-D-ribose 1-diphosphate: step 4/9. The protein is 1-(5-phosphoribosyl)-5-[(5-phosphoribosylamino)methylideneamino] imidazole-4-carboxamide isomerase of Dehalococcoides mccartyi (strain ATCC BAA-2266 / KCTC 15142 / 195) (Dehalococcoides ethenogenes (strain 195)).